The sequence spans 128 residues: MARILLLFLPGLVAVCAVHGIFMDRLASKKLCADDECVYTISLASAQEDYNAPDCRFINVKKGQQIYVYSKLVKENGAGEFWAGSVYGDGQDEMGVVGYFPRNLVKEQRVYQEATKEVPTTDIDFFCE.

The first 17 residues, 1–17 (MARILLLFLPGLVAVCA), serve as a signal peptide directing secretion. 2 disulfides stabilise this stretch: Cys32-Cys37 and Cys55-Cys127. One can recognise an SH3 domain in the interval 39–110 (YTISLASAQE…PRNLVKEQRV (72 aa)).

The protein belongs to the MIA/OTOR family. As to expression, highly expressed in cochlea.

The protein localises to the secreted. This Homo sapiens (Human) protein is Otoraplin (OTOR).